The primary structure comprises 603 residues: Nuclear receptor subfamily 2 group C member 1 (603 aa).

The segment at 1–178 is required for interaction with KAT2B; it reads MATIEEIAHQ…RLQRCIAFGM (178 aa). A DNA-binding region (nuclear receptor) is located at residues 110-185; that stretch reads FDLCVVCGDK…FGMKQDSVQC (76 aa). 2 consecutive NR C4-type zinc fingers follow at residues 113-133 and 149-168; these read CVVC…CEGC and CRGS…CQYC. 2 positions are modified to phosphoserine: Ser197 and Ser215. Thr220 carries the post-translational modification Phosphothreonine. The residue at position 222 (Thr222) is a Phosphothreonine; by MAPK1. Lys250 participates in a covalent cross-link: Glycyl lysine isopeptide (Lys-Gly) (interchain with G-Cter in SUMO); alternate. Lys250 is covalently cross-linked (Glycyl lysine isopeptide (Lys-Gly) (interchain with G-Cter in SUMO2); alternate). An NR LBD domain is found at 348-590; it reads GSVHLITGDS…SVIPHILKME (243 aa). Position 581 is a phosphoserine; by PKC (Ser581). Residues 584–603 are required for interaction with NRIP1; sequence PHILKMEPADYNSQIIGHSI. Lys588 participates in a covalent cross-link: Glycyl lysine isopeptide (Lys-Gly) (interchain with G-Cter in SUMO2).

The protein belongs to the nuclear hormone receptor family. NR2 subfamily. Homodimer. Heterodimer; binds DNA as a heterodimer with NR2C2 required for chromatin remodeling and for binding to promoter regions such as globin DR1 repeats. Interacts with ESR1; the interaction prevents homodimerization of ESR1 and suppresses its transcriptional activity and cell growth. Interacts with NRIP1 (via its LXXLL motifs); the interaction provides corepressor activity. Interacts with HDAC3 (via the DNA-binding domain). Interacts with HDAC4 (via the DNA-binding domain). Interacts with PIAS1; the interaction is required for sumoylation of NR2C1. Interacts with UBE2I; the interaction is required for sumoylation of NR2C1. Interacts with KAT2B; the interaction acts as a corepressor of gene expression. Sumoylation requires both PIAS1 and UBE2I. Sumoylation appears to dissociate NR2C1 from the PML nuclear bodies. Enhances the interaction with NRIP1 but inhibits interaction with KAT2B. In proliferating cells, stimulation by all-trans retinoic acid, activation of MAPK1-mediated phosphorylation and recruitment to PML bodies with subsequent sumoylation, suppresses OCT4 expression. Post-translationally, phosphorylated on several serine and threonine residues. Phosphorylation on Thr-220, stimulated by all-trans retinoic acid (atRA) mediates PML location and sumoylation in proliferating cells which then modulates its association with effector molecules, KAT2B and NRIP1. Phosphorylation on Ser-581 by PKC is important for protein stability and function as activator of RARB.

It is found in the nucleus. Its subcellular location is the PML body. Its function is as follows. Orphan nuclear receptor. Binds the IR7 element in the promoter of its own gene in an autoregulatory negative feedback mechanism. Primarily repressor of a broad range of genes. Binds to hormone response elements (HREs) consisting of two 5'-AGGTCA-3' half site direct repeat consensus sequences. Together with NR2C2, forms the core of the DRED (direct repeat erythroid-definitive) complex that represses embryonic and fetal globin transcription. Also activator of OCT4 gene expression. May be involved in stem cell proliferation and differentiation. Mediator of retinoic acid-regulated preadipocyte proliferation. This is Nuclear receptor subfamily 2 group C member 1 (NR2C1) from Macaca fascicularis (Crab-eating macaque).